Consider the following 36-residue polypeptide: Photosystem I reaction center subunit VIII (36 aa).

The chain crosses the membrane as a helical span at residues 9 to 29 (ILVPLVGLIFPAFSMALFFLY).

It belongs to the PsaI family.

The protein localises to the plastid. It is found in the chloroplast thylakoid membrane. Its function is as follows. May help in the organization of the PsaL subunit. This Thalassiosira pseudonana (Marine diatom) protein is Photosystem I reaction center subunit VIII.